Here is a 218-residue protein sequence, read N- to C-terminus: Histone H1 (218 aa).

2 stretches are compositionally biased toward low complexity: residues 1–19 and 27–39; these read MSET…GAKA and AAGG…PAGP. 2 disordered regions span residues 1 to 41 and 89 to 218; these read MSET…GPSV and VGKG…PKKK. Position 2 is an N-acetylserine (S2). The H15 domain maps to 37–110; it reads AGPSVTELIT…GASGSFKLNK (74 aa). 4 stretches are compositionally biased toward basic residues: residues 119–133, 141–158, 166–184, and 191–218; these read ATKK…KPAA, KKPK…KAKK, KAAK…KKAA, and KAVK…PKKK.

This sequence belongs to the histone H1/H5 family.

It localises to the nucleus. The protein resides in the chromosome. Functionally, histones H1 are necessary for the condensation of nucleosome chains into higher-order structures. The sequence is that of Histone H1 from Anas platyrhynchos (Mallard).